The chain runs to 270 residues: Aliphatic sulfonates import ATP-binding protein SsuB 3 (270 aa).

One can recognise an ABC transporter domain in the interval 17 to 238 (LAVRKLKKAF…VRGSHRLAAL (222 aa)). 49–56 (GRSGCGKS) is a binding site for ATP.

It belongs to the ABC transporter superfamily. Aliphatic sulfonates importer (TC 3.A.1.17.2) family. In terms of assembly, the complex is composed of two ATP-binding proteins (SsuB), two transmembrane proteins (SsuC) and a solute-binding protein (SsuA).

It localises to the cell inner membrane. It catalyses the reaction ATP + H2O + aliphatic sulfonate-[sulfonate-binding protein]Side 1 = ADP + phosphate + aliphatic sulfonateSide 2 + [sulfonate-binding protein]Side 1.. Part of the ABC transporter complex SsuABC involved in aliphatic sulfonates import. Responsible for energy coupling to the transport system. The polypeptide is Aliphatic sulfonates import ATP-binding protein SsuB 3 (Pseudomonas syringae pv. syringae (strain B728a)).